Consider the following 191-residue polypeptide: MAEPLLVVGLGNPGDNYARTRHNVGFMVADLLAARMGSKFKAHKRSGAEIVSGRLAGRSVVVAKPRCYMNESGRQVGPLAKFYSVPPGDIIVIHDDLDLDFGRIRLKIGGGEGGHNGLRSVSNALGSKDFQRVRIGIGRPPGRKDPAAFVLENFTSTERADVPTICEQAADATELLIELGLEPAQNRVHAW.

Tyr-17 provides a ligand contact to tRNA. His-22 serves as the catalytic Proton acceptor. Positions 68, 70, and 116 each coordinate tRNA.

Belongs to the PTH family. In terms of assembly, monomer.

The protein resides in the cytoplasm. It catalyses the reaction an N-acyl-L-alpha-aminoacyl-tRNA + H2O = an N-acyl-L-amino acid + a tRNA + H(+). In terms of biological role, hydrolyzes ribosome-free peptidyl-tRNAs (with 1 or more amino acids incorporated), which drop off the ribosome during protein synthesis, or as a result of ribosome stalling. Functionally, catalyzes the release of premature peptidyl moieties from peptidyl-tRNA molecules trapped in stalled 50S ribosomal subunits, and thus maintains levels of free tRNAs and 50S ribosomes. In Mycobacterium avium (strain 104), this protein is Peptidyl-tRNA hydrolase.